Consider the following 250-residue polypeptide: Triosephosphate isomerase (250 aa).

Residue 9–11 (NWK) participates in substrate binding. His-94 functions as the Electrophile in the catalytic mechanism. The Proton acceptor role is filled by Glu-166. Residues Gly-172, Ser-212, and 233-234 (GG) contribute to the substrate site.

Belongs to the triosephosphate isomerase family. As to quaternary structure, homodimer.

The protein resides in the cytoplasm. It carries out the reaction D-glyceraldehyde 3-phosphate = dihydroxyacetone phosphate. It functions in the pathway carbohydrate biosynthesis; gluconeogenesis. Its pathway is carbohydrate degradation; glycolysis; D-glyceraldehyde 3-phosphate from glycerone phosphate: step 1/1. Its function is as follows. Involved in the gluconeogenesis. Catalyzes stereospecifically the conversion of dihydroxyacetone phosphate (DHAP) to D-glyceraldehyde-3-phosphate (G3P). The chain is Triosephosphate isomerase from Thermus thermophilus (strain ATCC 27634 / DSM 579 / HB8).